The chain runs to 203 residues: Protein GrpE (203 aa).

Over residues 1–20 (MSDNGDNNTKSPQHNNPQPN) the composition is skewed to polar residues. The tract at residues 1–46 (MSDNGDNNTKSPQHNNPQPNEKSDGKVQPGQPQVNPQRKFTAGINK) is disordered.

This sequence belongs to the GrpE family. In terms of assembly, homodimer.

It is found in the cytoplasm. Functionally, participates actively in the response to hyperosmotic and heat shock by preventing the aggregation of stress-denatured proteins, in association with DnaK and GrpE. It is the nucleotide exchange factor for DnaK and may function as a thermosensor. Unfolded proteins bind initially to DnaJ; upon interaction with the DnaJ-bound protein, DnaK hydrolyzes its bound ATP, resulting in the formation of a stable complex. GrpE releases ADP from DnaK; ATP binding to DnaK triggers the release of the substrate protein, thus completing the reaction cycle. Several rounds of ATP-dependent interactions between DnaJ, DnaK and GrpE are required for fully efficient folding. This chain is Protein GrpE, found in Ehrlichia chaffeensis (strain ATCC CRL-10679 / Arkansas).